The chain runs to 256 residues: uncharacterized protein (256 aa).

Residues 1 to 24 form the signal peptide; sequence MIKRVNKLVIGISLLFLVISITAG. A lipid anchor (N-palmitoyl cysteine) is attached at C25. The S-diacylglycerol cysteine moiety is linked to residue C25.

This sequence belongs to the staphylococcal tandem lipoprotein family.

It localises to the cell membrane. This is an uncharacterized protein from Staphylococcus aureus (strain bovine RF122 / ET3-1).